The following is a 595-amino-acid chain: Aspartate--tRNA ligase (595 aa).

Glu-173 serves as a coordination point for L-aspartate. The tract at residues 197 to 200 is aspartate; sequence QLFK. Arg-219 contacts L-aspartate. Residues 219-221 and Gln-228 contribute to the ATP site; that span reads RDE. Residue His-449 coordinates L-aspartate. Glu-483 contacts ATP. Position 490 (Arg-490) interacts with L-aspartate. Residue 535–538 participates in ATP binding; the sequence is GLDR.

Belongs to the class-II aminoacyl-tRNA synthetase family. Type 1 subfamily. In terms of assembly, homodimer.

It is found in the cytoplasm. It catalyses the reaction tRNA(Asp) + L-aspartate + ATP = L-aspartyl-tRNA(Asp) + AMP + diphosphate. In terms of biological role, catalyzes the attachment of L-aspartate to tRNA(Asp) in a two-step reaction: L-aspartate is first activated by ATP to form Asp-AMP and then transferred to the acceptor end of tRNA(Asp). The protein is Aspartate--tRNA ligase of Shewanella woodyi (strain ATCC 51908 / MS32).